We begin with the raw amino-acid sequence, 636 residues long: 1-deoxy-D-xylulose-5-phosphate synthase (636 aa).

Residues H74 and 115–117 (GHA) each bind thiamine diphosphate. Residue D146 coordinates Mg(2+). Thiamine diphosphate-binding positions include 147–148 (GA), N175, Y285, and E368. N175 provides a ligand contact to Mg(2+).

This sequence belongs to the transketolase family. DXPS subfamily. In terms of assembly, homodimer. Requires Mg(2+) as cofactor. Thiamine diphosphate serves as cofactor.

The enzyme catalyses D-glyceraldehyde 3-phosphate + pyruvate + H(+) = 1-deoxy-D-xylulose 5-phosphate + CO2. It functions in the pathway metabolic intermediate biosynthesis; 1-deoxy-D-xylulose 5-phosphate biosynthesis; 1-deoxy-D-xylulose 5-phosphate from D-glyceraldehyde 3-phosphate and pyruvate: step 1/1. Its function is as follows. Catalyzes the acyloin condensation reaction between C atoms 2 and 3 of pyruvate and glyceraldehyde 3-phosphate to yield 1-deoxy-D-xylulose-5-phosphate (DXP). The chain is 1-deoxy-D-xylulose-5-phosphate synthase from Anaeromyxobacter sp. (strain K).